The primary structure comprises 129 residues: Cytochrome c oxidase subunit 5B, mitochondrial (129 aa).

The N-terminal 31 residues, 1–31 (MASRLLRGAGTLAAQALRARGPSGAAAMRSM), are a transit peptide targeting the mitochondrion. An N6-acetyllysine mark is found at K68 and K86. Residues C91, C93, C113, and C116 each coordinate Zn(2+). N6-acetyllysine is present on K121.

Belongs to the cytochrome c oxidase subunit 5B family. As to quaternary structure, component of the cytochrome c oxidase (complex IV, CIV), a multisubunit enzyme composed of 14 subunits. The complex is composed of a catalytic core of 3 subunits MT-CO1, MT-CO2 and MT-CO3, encoded in the mitochondrial DNA, and 11 supernumerary subunits COX4I1 (or COX4I2), COX5A, COX5B, COX6A1 (or COX6A2), COX6B1 (or COX6B2), COX6C, COX7A2 (or COX7A1), COX7B, COX7C, COX8A and NDUFA4, which are encoded in the nuclear genome. The complex exists as a monomer or a dimer and forms supercomplexes (SCs) in the inner mitochondrial membrane with NADH-ubiquinone oxidoreductase (complex I, CI) and ubiquinol-cytochrome c oxidoreductase (cytochrome b-c1 complex, complex III, CIII), resulting in different assemblies (supercomplex SCI(1)III(2)IV(1) and megacomplex MCI(2)III(2)IV(2)).

It is found in the mitochondrion inner membrane. The protein operates within energy metabolism; oxidative phosphorylation. Its function is as follows. Component of the cytochrome c oxidase, the last enzyme in the mitochondrial electron transport chain which drives oxidative phosphorylation. The respiratory chain contains 3 multisubunit complexes succinate dehydrogenase (complex II, CII), ubiquinol-cytochrome c oxidoreductase (cytochrome b-c1 complex, complex III, CIII) and cytochrome c oxidase (complex IV, CIV), that cooperate to transfer electrons derived from NADH and succinate to molecular oxygen, creating an electrochemical gradient over the inner membrane that drives transmembrane transport and the ATP synthase. Cytochrome c oxidase is the component of the respiratory chain that catalyzes the reduction of oxygen to water. Electrons originating from reduced cytochrome c in the intermembrane space (IMS) are transferred via the dinuclear copper A center (CU(A)) of subunit 2 and heme A of subunit 1 to the active site in subunit 1, a binuclear center (BNC) formed by heme A3 and copper B (CU(B)). The BNC reduces molecular oxygen to 2 water molecules using 4 electrons from cytochrome c in the IMS and 4 protons from the mitochondrial matrix. The protein is Cytochrome c oxidase subunit 5B, mitochondrial (COX5B) of Homo sapiens (Human).